Here is a 255-residue protein sequence, read N- to C-terminus: uncharacterized protein (255 aa).

This is an uncharacterized protein from Acanthamoeba polyphaga mimivirus (APMV).